A 258-amino-acid chain; its full sequence is Indole-3-glycerol phosphate synthase 2 (258 aa).

The protein belongs to the TrpC family.

It catalyses the reaction 1-(2-carboxyphenylamino)-1-deoxy-D-ribulose 5-phosphate + H(+) = (1S,2R)-1-C-(indol-3-yl)glycerol 3-phosphate + CO2 + H2O. It functions in the pathway amino-acid biosynthesis; L-tryptophan biosynthesis; L-tryptophan from chorismate: step 4/5. The function of the second trp operon in S.coelicolor is to produce tryptophan for the biosynthesis of calcium-dependent antibiotic (CDA). The polypeptide is Indole-3-glycerol phosphate synthase 2 (trpC2) (Streptomyces coelicolor (strain ATCC BAA-471 / A3(2) / M145)).